Here is a 277-residue protein sequence, read N- to C-terminus: Undecaprenyl-diphosphatase (277 aa).

7 helical membrane passes run 5–25, 44–64, 86–106, 110–130, 184–204, 219–239, and 255–275; these read WTAA…FLPI, RAMA…VWEF, LNLL…ADTI, LFNA…MLWA, AATE…AVYS, VFAI…RALL, and IAFG…WASA.

This sequence belongs to the UppP family.

It localises to the cell inner membrane. The enzyme catalyses di-trans,octa-cis-undecaprenyl diphosphate + H2O = di-trans,octa-cis-undecaprenyl phosphate + phosphate + H(+). Functionally, catalyzes the dephosphorylation of undecaprenyl diphosphate (UPP). Confers resistance to bacitracin. This chain is Undecaprenyl-diphosphatase, found in Pseudomonas savastanoi pv. phaseolicola (strain 1448A / Race 6) (Pseudomonas syringae pv. phaseolicola (strain 1448A / Race 6)).